Consider the following 251-residue polypeptide: MDNICELFDEILPLIIEYLSDHDKVKFMTTCSRLYYFIDKVYYENIYDYNKIYHLEFTERFKRIRFCAINESIPSVITDLTLDREFTGSLGNCKFPRLTYIKLSQSQYDTNKNYIPSNIEIDIPNPFKNFHLTEFDMSKLFDDSYYIFSGTYMGSSSWYSTKTILRSRNFLSYYWNLDIVNYDRLESPEPESQENFRPIFPTESNNNKPVNKSQPQIKKSRSQKKFDKFYYQKKIVSNNNKRPKSFMKYRR.

An F-box domain is found at 1-46 (MDNICELFDEILPLIIEYLSDHDKVKFMTTCSRLYYFIDKVYYENI). The disordered stretch occupies residues 188–251 (PEPESQENFR…RPKSFMKYRR (64 aa)). Residues 202–217 (TESNNNKPVNKSQPQI) show a composition bias toward polar residues. Residues 241 to 251 (KRPKSFMKYRR) are compositionally biased toward basic residues.

In Acanthamoeba polyphaga (Amoeba), this protein is Putative F-box protein L166.